We begin with the raw amino-acid sequence, 130 residues long: Small ribosomal subunit protein uS8 (130 aa).

Belongs to the universal ribosomal protein uS8 family. Part of the 30S ribosomal subunit. Contacts proteins S5 and S12.

One of the primary rRNA binding proteins, it binds directly to 16S rRNA central domain where it helps coordinate assembly of the platform of the 30S subunit. The chain is Small ribosomal subunit protein uS8 from Edwardsiella ictaluri (strain 93-146).